A 248-amino-acid chain; its full sequence is UDP-2,3-diacylglucosamine hydrolase (248 aa).

Mn(2+) is bound by residues aspartate 8, histidine 10, aspartate 41, asparagine 79, and histidine 114. A substrate-binding site is contributed by asparagine 79 to arginine 80. Substrate-binding residues include aspartate 122, serine 160, aspartate 171, glutamine 174, and histidine 202. Residues histidine 202 and histidine 204 each contribute to the Mn(2+) site.

The protein belongs to the LpxH family. Mn(2+) serves as cofactor.

The protein localises to the cell inner membrane. It carries out the reaction UDP-2-N,3-O-bis[(3R)-3-hydroxytetradecanoyl]-alpha-D-glucosamine + H2O = 2-N,3-O-bis[(3R)-3-hydroxytetradecanoyl]-alpha-D-glucosaminyl 1-phosphate + UMP + 2 H(+). Its pathway is glycolipid biosynthesis; lipid IV(A) biosynthesis; lipid IV(A) from (3R)-3-hydroxytetradecanoyl-[acyl-carrier-protein] and UDP-N-acetyl-alpha-D-glucosamine: step 4/6. Hydrolyzes the pyrophosphate bond of UDP-2,3-diacylglucosamine to yield 2,3-diacylglucosamine 1-phosphate (lipid X) and UMP by catalyzing the attack of water at the alpha-P atom. Involved in the biosynthesis of lipid A, a phosphorylated glycolipid that anchors the lipopolysaccharide to the outer membrane of the cell. The chain is UDP-2,3-diacylglucosamine hydrolase from Stenotrophomonas maltophilia (strain K279a).